We begin with the raw amino-acid sequence, 62 residues long: uncharacterized protein (62 aa).

This is an uncharacterized protein from Escherichia coli.